The chain runs to 595 residues: Aspartate--tRNA(Asp/Asn) ligase (595 aa).

L-aspartate is bound at residue glutamate 177. An aspartate region spans residues 201-204 (QQFK). An L-aspartate-binding site is contributed by arginine 223. ATP is bound by residues 223–225 (RDE) and glutamine 232. Histidine 455 contacts L-aspartate. Glutamate 489 contributes to the ATP binding site. Arginine 496 is an L-aspartate binding site. Residue 542-545 (GLDR) coordinates ATP.

This sequence belongs to the class-II aminoacyl-tRNA synthetase family. Type 1 subfamily. Homodimer.

The protein localises to the cytoplasm. The catalysed reaction is tRNA(Asx) + L-aspartate + ATP = L-aspartyl-tRNA(Asx) + AMP + diphosphate. Functionally, aspartyl-tRNA synthetase with relaxed tRNA specificity since it is able to aspartylate not only its cognate tRNA(Asp) but also tRNA(Asn). Reaction proceeds in two steps: L-aspartate is first activated by ATP to form Asp-AMP and then transferred to the acceptor end of tRNA(Asp/Asn). The sequence is that of Aspartate--tRNA(Asp/Asn) ligase from Opitutus terrae (strain DSM 11246 / JCM 15787 / PB90-1).